A 93-amino-acid polypeptide reads, in one-letter code: Acylphosphatase (93 aa).

Residues 6–92 form the Acylphosphatase-like domain; it reads RAHVWVGGKV…EGLTHFEVLR (87 aa). Catalysis depends on residues R21 and N39.

This sequence belongs to the acylphosphatase family.

The enzyme catalyses an acyl phosphate + H2O = a carboxylate + phosphate + H(+). The sequence is that of Acylphosphatase (acyP) from Gloeobacter violaceus (strain ATCC 29082 / PCC 7421).